A 249-amino-acid polypeptide reads, in one-letter code: Triosephosphate isomerase (249 aa).

9-11 (NWK) contributes to the substrate binding site. H95 functions as the Electrophile in the catalytic mechanism. The active-site Proton acceptor is E167. Residues G173, S213, and 234 to 235 (GG) contribute to the substrate site.

This sequence belongs to the triosephosphate isomerase family. Homodimer.

The protein resides in the cytoplasm. It carries out the reaction D-glyceraldehyde 3-phosphate = dihydroxyacetone phosphate. It participates in carbohydrate biosynthesis; gluconeogenesis. It functions in the pathway carbohydrate degradation; glycolysis; D-glyceraldehyde 3-phosphate from glycerone phosphate: step 1/1. Its function is as follows. Involved in the gluconeogenesis. Catalyzes stereospecifically the conversion of dihydroxyacetone phosphate (DHAP) to D-glyceraldehyde-3-phosphate (G3P). The chain is Triosephosphate isomerase from Dictyoglomus thermophilum (strain ATCC 35947 / DSM 3960 / H-6-12).